A 907-amino-acid polypeptide reads, in one-letter code: Probable disease resistance protein At1g58390 (907 aa).

Residues 144–456 enclose the NB-ARC domain; sequence QGDRQREMRQ…AEGISTAEDY (313 aa). 190–197 contacts ATP; it reads GMGGLGKT. LRR repeat units lie at residues 608–631 and 843–868; these read LIHLRYLSLQDAKVSHLPSSLGNL and MPLLETLSILDCEELKEIPDGLRFIY.

This sequence belongs to the disease resistance NB-LRR family.

Its function is as follows. Possible disease resistance protein. The protein is Probable disease resistance protein At1g58390 of Arabidopsis thaliana (Mouse-ear cress).